The primary structure comprises 336 residues: MKERIVNLETLDFETSQEVSLRPNLWEDFIGQEKIKSNLQISICAAKKRQESLDHMLFFGPPGLGKTSISHIIAKEMETNIKITAAPMIEKSGDLAAILTNLQAKDILFIDEIHRLSPAIEEVLYPAMEDFRLDIIIGSGPAAQTIKIDLPPFTLIGATTRAGMLSNPLRDRFGMSFRMQFYSPSELSLIIKKAAAKLNQDIKEESADEIAKRSRGTPRIALRLLKRVRDFALVKNSSLMDLSITLHALNELGVNELGFDEADLAYLSLLANAQGRPVGLNTIAASMREDEGTIEDVIEPFLLANGYLERTAKGRIATPKTHALLKIPTLNPQTLF.

The interval 1-182 (MKERIVNLET…FGMSFRMQFY (182 aa)) is large ATPase domain (RuvB-L). Residues leucine 21, arginine 22, glycine 63, lysine 66, threonine 67, serine 68, 129–131 (EDF), arginine 172, tyrosine 182, and arginine 219 contribute to the ATP site. Residue threonine 67 participates in Mg(2+) binding. A small ATPAse domain (RuvB-S) region spans residues 183–253 (SPSELSLIIK…ITLHALNELG (71 aa)). Positions 256–336 (ELGFDEADLA…IPTLNPQTLF (81 aa)) are head domain (RuvB-H). 2 residues coordinate DNA: arginine 310 and arginine 315.

Belongs to the RuvB family. In terms of assembly, homohexamer. Forms an RuvA(8)-RuvB(12)-Holliday junction (HJ) complex. HJ DNA is sandwiched between 2 RuvA tetramers; dsDNA enters through RuvA and exits via RuvB. An RuvB hexamer assembles on each DNA strand where it exits the tetramer. Each RuvB hexamer is contacted by two RuvA subunits (via domain III) on 2 adjacent RuvB subunits; this complex drives branch migration. In the full resolvosome a probable DNA-RuvA(4)-RuvB(12)-RuvC(2) complex forms which resolves the HJ.

The protein resides in the cytoplasm. It catalyses the reaction ATP + H2O = ADP + phosphate + H(+). Functionally, the RuvA-RuvB-RuvC complex processes Holliday junction (HJ) DNA during genetic recombination and DNA repair, while the RuvA-RuvB complex plays an important role in the rescue of blocked DNA replication forks via replication fork reversal (RFR). RuvA specifically binds to HJ cruciform DNA, conferring on it an open structure. The RuvB hexamer acts as an ATP-dependent pump, pulling dsDNA into and through the RuvAB complex. RuvB forms 2 homohexamers on either side of HJ DNA bound by 1 or 2 RuvA tetramers; 4 subunits per hexamer contact DNA at a time. Coordinated motions by a converter formed by DNA-disengaged RuvB subunits stimulates ATP hydrolysis and nucleotide exchange. Immobilization of the converter enables RuvB to convert the ATP-contained energy into a lever motion, pulling 2 nucleotides of DNA out of the RuvA tetramer per ATP hydrolyzed, thus driving DNA branch migration. The RuvB motors rotate together with the DNA substrate, which together with the progressing nucleotide cycle form the mechanistic basis for DNA recombination by continuous HJ branch migration. Branch migration allows RuvC to scan DNA until it finds its consensus sequence, where it cleaves and resolves cruciform DNA. The chain is Holliday junction branch migration complex subunit RuvB from Helicobacter pylori (strain J99 / ATCC 700824) (Campylobacter pylori J99).